The following is a 543-amino-acid chain: Bifunctional riboflavin biosynthesis protein RIBA 1, chloroplastic (543 aa).

A chloroplast-targeting transit peptide spans 1–56; it reads MSSINLSSSSPSTISLSRSRLSQSSTTLLHGLHRVTLPSNHPLSTFSIKTNTGKVK. Positions 57 to 328 are DHBP synthase; it reads AAVISREDDL…IADLIRYRRK (272 aa). D-ribulose 5-phosphate contacts are provided by residues 152–153, Asp-157, 267–271, and Glu-291; these read RE and RAGHT. Mg(2+) is bound at residue Glu-153. His-270 lines the Mg(2+) pocket. The GTP cyclohydrolase II stretch occupies residues 329–543; sequence RDKLVERASA…VEKIESESES (215 aa). 379 to 383 provides a ligand contact to GTP; that stretch reads RVHSE. 3 residues coordinate Zn(2+): Cys-384, Cys-395, and Cys-397. Residues Gln-400, 423–425, and Thr-445 each bind GTP; that span reads EGR. The Proton acceptor; for GTP cyclohydrolase activity role is filled by Asp-457. The Nucleophile; for GTP cyclohydrolase activity role is filled by Arg-459. The GTP site is built by Thr-480 and Lys-485.

The protein in the N-terminal section; belongs to the DHBP synthase family. It in the C-terminal section; belongs to the GTP cyclohydrolase II family. It depends on Mg(2+) as a cofactor. Mn(2+) serves as cofactor. Requires Zn(2+) as cofactor. As to expression, expressed in leaves, shoots, roots, flowers and siliques.

It is found in the plastid. The protein resides in the chloroplast. It catalyses the reaction D-ribulose 5-phosphate = (2S)-2-hydroxy-3-oxobutyl phosphate + formate + H(+). The catalysed reaction is GTP + 4 H2O = 2,5-diamino-6-hydroxy-4-(5-phosphoribosylamino)-pyrimidine + formate + 2 phosphate + 3 H(+). It participates in cofactor biosynthesis; riboflavin biosynthesis; 2-hydroxy-3-oxobutyl phosphate from D-ribulose 5-phosphate: step 1/1. The protein operates within cofactor biosynthesis; riboflavin biosynthesis; 5-amino-6-(D-ribitylamino)uracil from GTP: step 1/4. Its function is as follows. Involved in riboflavin biosynthesis. Catalyzes both the conversion of D-ribulose 5-phosphate to formate and 3,4-dihydroxy-2-butanone 4-phosphate and the conversion of GTP to 2,5-diamino-6-ribosylamino-4(3H)-pyrimidinone 5'-phosphate (DARP), formate and pyrophosphate. RIBA2 and RIBA3 together are not able to complement the loss of function of RIBA1. The chain is Bifunctional riboflavin biosynthesis protein RIBA 1, chloroplastic (RIBA1) from Arabidopsis thaliana (Mouse-ear cress).